We begin with the raw amino-acid sequence, 556 residues long: Glutamine--tRNA ligase (556 aa).

The short motif at 35 to 45 (PEPNGYLHIGH) is the 'HIGH' region element. Residues 36 to 38 (EPN) and 42 to 48 (HIGHAKS) contribute to the ATP site. L-glutamine-binding residues include D68 and Y213. Residues T232 and 262 to 263 (RL) each bind ATP. Positions 269-273 (VTSKR) match the 'KMSKS' region motif.

This sequence belongs to the class-I aminoacyl-tRNA synthetase family. Monomer.

It localises to the cytoplasm. The enzyme catalyses tRNA(Gln) + L-glutamine + ATP = L-glutaminyl-tRNA(Gln) + AMP + diphosphate. The polypeptide is Glutamine--tRNA ligase (Pseudomonas aeruginosa (strain LESB58)).